Reading from the N-terminus, the 118-residue chain is Large ribosomal subunit protein bL20 (118 aa).

Belongs to the bacterial ribosomal protein bL20 family.

In terms of biological role, binds directly to 23S ribosomal RNA and is necessary for the in vitro assembly process of the 50S ribosomal subunit. It is not involved in the protein synthesizing functions of that subunit. The protein is Large ribosomal subunit protein bL20 of Caldicellulosiruptor saccharolyticus (strain ATCC 43494 / DSM 8903 / Tp8T 6331).